A 449-amino-acid chain; its full sequence is Alpha-L-fucosidase (449 aa).

The first 19 residues, Met-1–Ala-19, serve as a signal peptide directing secretion. Residues Asn-156, Asn-224, Asn-362, and Asn-375 are each glycosylated (N-linked (GlcNAc...) asparagine).

Belongs to the glycosyl hydrolase 29 family. In terms of assembly, homotetramer.

It localises to the secreted. The enzyme catalyses an alpha-L-fucoside + H2O = L-fucose + an alcohol. In terms of biological role, alpha-L-fucosidase is responsible for hydrolyzing the alpha-1,6-linked fucose joined to the reducing-end N-acetylglucosamine of the carbohydrate moieties of glycoproteins. The polypeptide is Alpha-L-fucosidase (Branchiostoma floridae (Florida lancelet)).